We begin with the raw amino-acid sequence, 264 residues long: Hemin import ATP-binding protein HmuV (264 aa).

The ABC transporter domain occupies 2 to 241 (IEVSGLSVRL…ATMLSVFGCA (240 aa)). 34-41 (GPNGSGKT) provides a ligand contact to ATP.

Belongs to the ABC transporter superfamily. Heme (hemin) importer (TC 3.A.1.14.5) family. The complex is composed of two ATP-binding proteins (HmuV), two transmembrane proteins (HmuU) and a solute-binding protein (HmuT).

The protein resides in the cell inner membrane. Its function is as follows. Part of the ABC transporter complex HmuTUV involved in hemin import. Responsible for energy coupling to the transport system. The sequence is that of Hemin import ATP-binding protein HmuV from Rhizobium etli (strain ATCC 51251 / DSM 11541 / JCM 21823 / NBRC 15573 / CFN 42).